A 513-amino-acid chain; its full sequence is ATP synthase subunit alpha (513 aa).

Position 172-179 (172-179 (GDRQTGKT)) interacts with ATP.

This sequence belongs to the ATPase alpha/beta chains family. F-type ATPases have 2 components, CF(1) - the catalytic core - and CF(0) - the membrane proton channel. CF(1) has five subunits: alpha(3), beta(3), gamma(1), delta(1), epsilon(1). CF(0) has three main subunits: a(1), b(2) and c(9-12). The alpha and beta chains form an alternating ring which encloses part of the gamma chain. CF(1) is attached to CF(0) by a central stalk formed by the gamma and epsilon chains, while a peripheral stalk is formed by the delta and b chains.

The protein localises to the cell inner membrane. It catalyses the reaction ATP + H2O + 4 H(+)(in) = ADP + phosphate + 5 H(+)(out). Functionally, produces ATP from ADP in the presence of a proton gradient across the membrane. The alpha chain is a regulatory subunit. The polypeptide is ATP synthase subunit alpha (Gluconacetobacter diazotrophicus (strain ATCC 49037 / DSM 5601 / CCUG 37298 / CIP 103539 / LMG 7603 / PAl5)).